We begin with the raw amino-acid sequence, 883 residues long: Phosphoenolpyruvate carboxylase (883 aa).

Residues His-138 and Lys-546 contribute to the active site.

The protein belongs to the PEPCase type 1 family. Requires Mg(2+) as cofactor.

The catalysed reaction is oxaloacetate + phosphate = phosphoenolpyruvate + hydrogencarbonate. Functionally, forms oxaloacetate, a four-carbon dicarboxylic acid source for the tricarboxylic acid cycle. The polypeptide is Phosphoenolpyruvate carboxylase (Shigella flexneri).